A 377-amino-acid polypeptide reads, in one-letter code: MEQLSAANTRFAVDLFLTLTEHNPAGNIFISPFSISSALAMVFLGARGDTAAQMSKALHFEGVEIHSGFQSLNADINKCGAPYTLKLANRLFGEKSYDFLPEFLASTQEMYSAELASVDFLRAPEDARKTINAWVKEQTGGKIPELLASGMVDSLTKLVLVNAIYFKGKWQEKFMVEATKDAPFRLNKKETKTVKMMYQKKKFPFGYIKDLKCRVLELPYEGKDLSMVILLPDDIQDEATGLKKIEQQLTLEKLREWTRPESLDLLEVRVQLPRFKLEESYDLQEPLARLGVRDLFSSKADLSGMSGAKDLFISKVVHKSVVDVNEEGTEAAAATGAIAEFAMLVPEEEFVADHPFIFFIRHKPSSNILFLGRLSSP.

The residue at position 1 (M1) is an N-acetylmethionine. At K136 the chain carries N6-acetyllysine. Phosphoserine is present on S298. The CARD-binding motif (CBM) stretch occupies residues E349–P377.

The protein belongs to the serpin family. Ov-serpin subfamily. In terms of assembly, monomer. Interacts (via C-terminus) with CASP1; CASP4 (via CARD domain) and CASP5; these interactions regulate the activity of inflammatory caspases. Interacts with PRTN3. Interacts with GZMH.

The protein localises to the secreted. It localises to the cytoplasm. Its subcellular location is the cytolytic granule. The protein resides in the early endosome. Neutrophil serine protease inhibitor that plays an essential role in the regulation of the innate immune response, inflammation and cellular homeostasis. Acts primarily to protect the cell from proteases released in the cytoplasm during stress or infection. These proteases are important in killing microbes but when released from granules, these potent enzymes also destroy host proteins and contribute to mortality. Regulates the activity of the neutrophil proteases elastase, cathepsin G, proteinase-3, chymase, chymotrypsin, and kallikrein-3. Also acts as a potent intracellular inhibitor of GZMH by directly blocking its proteolytic activity. During inflammation, limits the activity of inflammatory caspases CASP1, CASP4 and CASP5 by suppressing their caspase-recruitment domain (CARD) oligomerization and enzymatic activation. When secreted, promotes the proliferation of beta-cells via its protease inhibitory function. The protein is Leukocyte elastase inhibitor (SERPINB1) of Bos taurus (Bovine).